A 333-amino-acid chain; its full sequence is S-adenosylmethionine decarboxylase proenzyme (333 aa).

A substrate-binding site is contributed by Phe7. Catalysis depends on residues Glu8 and Glu11. Glu67 contributes to the substrate binding site. Ser68 acts as the Schiff-base intermediate with substrate; via pyruvic acid in catalysis. The residue at position 68 (Ser68) is a Pyruvic acid (Ser); by autocatalysis. Cys82 serves as the catalytic Proton donor; for catalytic activity. Phe223 lines the substrate pocket. Residues Ser229 and His243 each act as proton acceptor; for processing activity in the active site. Glu247 contributes to the substrate binding site. The residue at position 298 (Ser298) is a Phosphoserine.

This sequence belongs to the eukaryotic AdoMetDC family. In terms of assembly, heterotetramer of two alpha and two beta chains. Pyruvate is required as a cofactor. Post-translationally, is synthesized initially as an inactive proenzyme. Formation of the active enzyme involves a self-maturation process in which the active site pyruvoyl group is generated from an internal serine residue via an autocatalytic post-translational modification. Two non-identical subunits are generated from the proenzyme in this reaction, and the pyruvate is formed at the N-terminus of the alpha chain, which is derived from the carboxyl end of the proenzyme. The post-translation cleavage follows an unusual pathway, termed non-hydrolytic serinolysis, in which the side chain hydroxyl group of the serine supplies its oxygen atom to form the C-terminus of the beta chain, while the remainder of the serine residue undergoes an oxidative deamination to produce ammonia and the pyruvoyl group blocking the N-terminus of the alpha chain.

It catalyses the reaction S-adenosyl-L-methionine + H(+) = S-adenosyl 3-(methylsulfanyl)propylamine + CO2. It functions in the pathway amine and polyamine biosynthesis; S-adenosylmethioninamine biosynthesis; S-adenosylmethioninamine from S-adenosyl-L-methionine: step 1/1. Essential for biosynthesis of the polyamines spermidine and spermine. Promotes maintenance and self-renewal of embryonic stem cells, by maintaining spermine levels. The chain is S-adenosylmethionine decarboxylase proenzyme (Amd1) from Rattus norvegicus (Rat).